We begin with the raw amino-acid sequence, 206 residues long: Ribosomal RNA small subunit methyltransferase G (206 aa).

S-adenosyl-L-methionine contacts are provided by residues G74, L79, 125–126 (VE), and R140.

Belongs to the methyltransferase superfamily. RNA methyltransferase RsmG family.

It localises to the cytoplasm. It catalyses the reaction guanosine(527) in 16S rRNA + S-adenosyl-L-methionine = N(7)-methylguanosine(527) in 16S rRNA + S-adenosyl-L-homocysteine. Its function is as follows. Specifically methylates the N7 position of guanine in position 527 of 16S rRNA. The chain is Ribosomal RNA small subunit methyltransferase G from Shewanella putrefaciens (strain CN-32 / ATCC BAA-453).